The following is a 446-amino-acid chain: 3-phosphoshikimate 1-carboxyvinyltransferase (446 aa).

Positions 26, 27, and 31 each coordinate 3-phosphoshikimate. Lysine 26 contributes to the phosphoenolpyruvate binding site. Residues glycine 100 and arginine 128 each contribute to the phosphoenolpyruvate site. 3-phosphoshikimate-binding residues include serine 171, serine 172, glutamine 173, serine 200, glutamate 315, and histidine 344. A phosphoenolpyruvate-binding site is contributed by glutamine 173. Glutamate 315 functions as the Proton acceptor in the catalytic mechanism. Phosphoenolpyruvate is bound by residues arginine 348, arginine 389, and lysine 414.

The protein belongs to the EPSP synthase family. In terms of assembly, monomer.

Its subcellular location is the cytoplasm. The enzyme catalyses 3-phosphoshikimate + phosphoenolpyruvate = 5-O-(1-carboxyvinyl)-3-phosphoshikimate + phosphate. It participates in metabolic intermediate biosynthesis; chorismate biosynthesis; chorismate from D-erythrose 4-phosphate and phosphoenolpyruvate: step 6/7. In terms of biological role, catalyzes the transfer of the enolpyruvyl moiety of phosphoenolpyruvate (PEP) to the 5-hydroxyl of shikimate-3-phosphate (S3P) to produce enolpyruvyl shikimate-3-phosphate and inorganic phosphate. In Mycolicibacterium gilvum (strain PYR-GCK) (Mycobacterium gilvum (strain PYR-GCK)), this protein is 3-phosphoshikimate 1-carboxyvinyltransferase.